Here is a 325-residue protein sequence, read N- to C-terminus: Flotillin-like protein FloA (325 aa).

2 helical membrane passes run 4–24 and 26–46; these read LGIV…FSFI and VGLW…TLVA.

Belongs to the flotillin-like FloA family. Homooligomerizes.

The protein resides in the cell membrane. Its subcellular location is the membrane raft. Found in functional membrane microdomains (FMM) that may be equivalent to eukaryotic membrane rafts. FMMs are highly dynamic and increase in number as cells age. Flotillins are thought to be important factors in membrane fluidity. This Thermus thermophilus (strain ATCC BAA-163 / DSM 7039 / HB27) protein is Flotillin-like protein FloA.